The following is a 383-amino-acid chain: MSTTHETPEATAEGDKPCIAVVFGGRSSEHSISLITARSVLRAIDRDRWDVVSVGISTDGAWFLCSQEELEALLDDQPMAQLPVGVHRVSLPLQTGDSRLLIHDTSEHGAPLSRGRHIDAVFPLLHGPFGEDGTLQGMLELADLPYVGCGVAASAIGMDKHFMKLAFQAAGLEVGPYTVVHDRTWRTDPLGVREAVAELGFPVFVKPARAGSSFGITRVDEPSQLDAAIATAREHDLKLVVEAGIDGREIECAVLGGHGTDEARASLPGEIEVHGHALYDFEAKYVESDGATLSCPARLPEHVIDTLRRDAVRAFHAVDGEGLSRCDFFVTADERVLINEINTMPGFTPISMYPRMWAASGIDYSALIDELITLALERPVGLR.

In terms of domain architecture, ATP-grasp spans lysine 164–threonine 373. Valine 196 to glutamate 251 serves as a coordination point for ATP. Mg(2+)-binding residues include aspartate 327, glutamate 340, and asparagine 342.

This sequence belongs to the D-alanine--D-alanine ligase family. Mg(2+) serves as cofactor. Mn(2+) is required as a cofactor.

The protein resides in the cytoplasm. The enzyme catalyses 2 D-alanine + ATP = D-alanyl-D-alanine + ADP + phosphate + H(+). The protein operates within cell wall biogenesis; peptidoglycan biosynthesis. In terms of biological role, cell wall formation. This is D-alanine--D-alanine ligase from Kocuria rhizophila (strain ATCC 9341 / DSM 348 / NBRC 103217 / DC2201).